The sequence spans 48 residues: Large ribosomal subunit protein eL40 (48 aa).

This sequence belongs to the eukaryotic ribosomal protein eL40 family.

This is Large ribosomal subunit protein eL40 from Methanoculleus marisnigri (strain ATCC 35101 / DSM 1498 / JR1).